Here is a 240-residue protein sequence, read N- to C-terminus: MRDMTPGPDLSGPQAADEFQSDPYAPEVGELPEQSAQDSEKVNKTGTTTIGISTSDGVVIATDMRASLGGRFVSNKNVQKVEEIHPTAALTLVGSVGGAQSFIRTLRAEVNLYEARRGEDISMKALSTLAGNFARGGPFFAINPILGGVDDDGHHVYSIDPAGGVMKDDYTVTGSGLTVAYGTLEDRYEEDMTNEEAKEVAAASIKAAAERDTGSGNGIYLADVTADGVDINGYDFDELL.

A propeptide spans 1-46 (MRDMTPGPDLSGPQAADEFQSDPYAPEVGELPEQSAQDSEKVNKTG) (removed in mature form; by autocatalysis). The segment at 1-48 (MRDMTPGPDLSGPQAADEFQSDPYAPEVGELPEQSAQDSEKVNKTGTT) is disordered. Residue Thr47 is the Nucleophile of the active site.

This sequence belongs to the peptidase T1B family. In terms of assembly, the 20S proteasome core is composed of 14 alpha and 14 beta subunits that assemble into four stacked heptameric rings, resulting in a barrel-shaped structure. The two inner rings, each composed of seven catalytic beta subunits, are sandwiched by two outer rings, each composed of seven alpha subunits. The catalytic chamber with the active sites is on the inside of the barrel. Has a gated structure, the ends of the cylinder being occluded by the N-termini of the alpha-subunits. Is capped at one or both ends by the proteasome regulatory ATPase, PAN.

It localises to the cytoplasm. It catalyses the reaction Cleavage of peptide bonds with very broad specificity.. The formation of the proteasomal ATPase PAN-20S proteasome complex, via the docking of the C-termini of PAN into the intersubunit pockets in the alpha-rings, triggers opening of the gate for substrate entry. Interconversion between the open-gate and close-gate conformations leads to a dynamic regulation of the 20S proteasome proteolysis activity. Component of the proteasome core, a large protease complex with broad specificity involved in protein degradation. The polypeptide is Proteasome subunit beta 1 (Haloarcula marismortui (strain ATCC 43049 / DSM 3752 / JCM 8966 / VKM B-1809) (Halobacterium marismortui)).